The primary structure comprises 360 residues: Membrane-bound lytic murein transglycosylase C (360 aa).

The N-terminal stretch at 1 to 16 is a signal peptide; sequence MKKYLALALIAPLLVS. Cys-17 is lipidated: N-palmitoyl cysteine. Cys-17 carries the S-diacylglycerol cysteine lipid modification.

This sequence belongs to the transglycosylase Slt family.

Its subcellular location is the cell outer membrane. It catalyses the reaction Exolytic cleavage of the (1-&gt;4)-beta-glycosidic linkage between N-acetylmuramic acid (MurNAc) and N-acetylglucosamine (GlcNAc) residues in peptidoglycan, from either the reducing or the non-reducing ends of the peptidoglycan chains, with concomitant formation of a 1,6-anhydrobond in the MurNAc residue.. In terms of biological role, murein-degrading enzyme. May play a role in recycling of muropeptides during cell elongation and/or cell division. In Klebsiella pneumoniae (strain 342), this protein is Membrane-bound lytic murein transglycosylase C.